Reading from the N-terminus, the 422-residue chain is Protein krasavietz (422 aa).

A disordered region spans residues 1–26 (MSQKTERPVLSGQRIKTRKRDEREKY). The W2 domain occupies 244 to 415 (KLHKAQASQE…QSAEEESESE (172 aa)). Residues S407, S412, and S414 each carry the phosphoserine modification.

The protein belongs to the BZW family. Expressed in mushroom bodies.

Functionally, may be involved in memory formation. This chain is Protein krasavietz (kra), found in Drosophila melanogaster (Fruit fly).